Reading from the N-terminus, the 154-residue chain is Urease accessory protein UreE (154 aa).

The protein belongs to the UreE family.

It localises to the cytoplasm. Functionally, involved in urease metallocenter assembly. Binds nickel. Probably functions as a nickel donor during metallocenter assembly. This Rhizobium meliloti (strain 1021) (Ensifer meliloti) protein is Urease accessory protein UreE.